The chain runs to 308 residues: Oxygen-dependent coproporphyrinogen-III oxidase (308 aa).

Residue serine 100 participates in substrate binding. Histidine 104 and histidine 114 together coordinate a divalent metal cation. Catalysis depends on histidine 114, which acts as the Proton donor. Residue 116-118 (NFR) participates in substrate binding. A divalent metal cation contacts are provided by histidine 153 and histidine 183. The tract at residues 248 to 283 (YVEFNLVFDRGTIFGLQSGGRTESILSSMPPMASWR) is important for dimerization. 266–268 (GGR) is a substrate binding site.

Belongs to the aerobic coproporphyrinogen-III oxidase family. Homodimer. A divalent metal cation serves as cofactor.

It is found in the cytoplasm. It carries out the reaction coproporphyrinogen III + O2 + 2 H(+) = protoporphyrinogen IX + 2 CO2 + 2 H2O. The protein operates within porphyrin-containing compound metabolism; protoporphyrin-IX biosynthesis; protoporphyrinogen-IX from coproporphyrinogen-III (O2 route): step 1/1. Functionally, involved in the heme biosynthesis. Catalyzes the aerobic oxidative decarboxylation of propionate groups of rings A and B of coproporphyrinogen-III to yield the vinyl groups in protoporphyrinogen-IX. This Francisella tularensis subsp. novicida (strain U112) protein is Oxygen-dependent coproporphyrinogen-III oxidase.